Consider the following 149-residue polypeptide: Calmodulin-1 (149 aa).

Residue alanine 2 is modified to N-acetylalanine. 4 EF-hand domains span residues 8–43 (EQIA…LGQN), 44–79 (PTEA…KMKD), 81–116 (DSEE…LGEK), and 117–149 (LTDE…MTSK). Ca(2+) is bound by residues aspartate 21, aspartate 23, aspartate 25, threonine 27, glutamate 32, aspartate 57, aspartate 59, asparagine 61, threonine 63, glutamate 68, aspartate 94, aspartate 96, asparagine 98, and glutamate 105. N6,N6,N6-trimethyllysine is present on lysine 116. The Ca(2+) site is built by aspartate 130, aspartate 132, aspartate 134, glutamine 136, and glutamate 141.

Belongs to the calmodulin family.

In terms of biological role, calmodulin mediates the control of a large number of enzymes, ion channels and other proteins by Ca(2+). Among the enzymes to be stimulated by the calmodulin-Ca(2+) complex are a number of protein kinases and phosphatases. The sequence is that of Calmodulin-1 from Branchiostoma floridae (Florida lancelet).